The chain runs to 312 residues: Olfactory receptor 1D5 (312 aa).

The Extracellular segment spans residues 1–25 (MDGDNQSENSQFLLLGISESPEQQR). A glycan (N-linked (GlcNAc...) asparagine) is linked at asparagine 5. The helical transmembrane segment at 26 to 49 (ILFWMFLSMYLVTVLGNVLIILAI) threads the bilayer. Residues 50-57 (SSDSHLHT) lie on the Cytoplasmic side of the membrane. Residues 58-79 (PMYFFLANLSFTDLFFVTNTIP) traverse the membrane as a helical segment. Residues 80 to 100 (KMLVNFQSQNKAISYAGCLTQ) are Extracellular-facing. Residues cysteine 97 and cysteine 189 are joined by a disulfide bond. Residues 101 to 120 (LYFLVSLVTLDNLILAVMAY) traverse the membrane as a helical segment. Over 121-140 (DRYVATCCPLHYVTAMSPGL) the chain is Cytoplasmic. A helical transmembrane segment spans residues 141 to 158 (CVLLLSLCWGLSVLYGLL). Residues 159-196 (LTFLLTRVTFCGPREIHYLFCDMYILLWLACSNTHIIH) lie on the Extracellular side of the membrane. A helical membrane pass occupies residues 197-220 (TALIATGCFIFLTPLGFMTTSYVR). The Cytoplasmic portion of the chain corresponds to 221-237 (IVRTILQMPSASKKYKT). The chain crosses the membrane as a helical span at residues 238–260 (FSTCASHLGVVSLFYGTLAMVYL). The Extracellular segment spans residues 261–271 (QPLHTYSMKDS). Residues 272–291 (VATVMYAVLTPMMNPFIYRL) traverse the membrane as a helical segment. At 292–312 (RNKDMHGAPGRVLWRPFQRPK) the chain is on the cytoplasmic side.

It belongs to the G-protein coupled receptor 1 family.

It localises to the cell membrane. Odorant receptor. The polypeptide is Olfactory receptor 1D5 (OR1D5) (Homo sapiens (Human)).